The following is a 245-amino-acid chain: 1-(5-phosphoribosyl)-5-[(5-phosphoribosylamino)methylideneamino] imidazole-4-carboxamide isomerase (245 aa).

Asp-7 acts as the Proton acceptor in catalysis. Asp-129 (proton donor) is an active-site residue.

This sequence belongs to the HisA/HisF family.

Its subcellular location is the cytoplasm. It catalyses the reaction 1-(5-phospho-beta-D-ribosyl)-5-[(5-phospho-beta-D-ribosylamino)methylideneamino]imidazole-4-carboxamide = 5-[(5-phospho-1-deoxy-D-ribulos-1-ylimino)methylamino]-1-(5-phospho-beta-D-ribosyl)imidazole-4-carboxamide. It functions in the pathway amino-acid biosynthesis; L-histidine biosynthesis; L-histidine from 5-phospho-alpha-D-ribose 1-diphosphate: step 4/9. The sequence is that of 1-(5-phosphoribosyl)-5-[(5-phosphoribosylamino)methylideneamino] imidazole-4-carboxamide isomerase from Escherichia coli O9:H4 (strain HS).